We begin with the raw amino-acid sequence, 226 residues long: Putative integrase V10 (226 aa).

Residues R97, H174, and R177 contribute to the active site. Y210 functions as the O-(3'-phospho-DNA)-tyrosine intermediate in the catalytic mechanism.

This sequence belongs to the 'phage' integrase family.

Functionally, may catalyze site-specific integration of viral genome into host or helper virus DNA. The chain is Putative integrase V10 from Acanthamoeba polyphaga (Amoeba).